Here is a 430-residue protein sequence, read N- to C-terminus: Aspartate aminotransferase, mitochondrial (430 aa).

Residues 1–29 constitute a mitochondrion transit peptide; it reads MALLHSGRFLSGVAAAFHPGLAAAASARA. Thr-48 is modified (phosphothreonine). The residue at position 59 (Lys-59) is an N6-acetyllysine. Gly-65 is a binding site for substrate. The residue at position 73 (Lys-73) is an N6-acetyllysine; alternate. Lys-73 carries the post-translational modification N6-succinyllysine; alternate. N6-acetyllysine is present on Lys-82. Lys-90 carries the N6-acetyllysine; alternate modification. N6-succinyllysine; alternate is present on Lys-90. The residue at position 96 (Tyr-96) is a 3'-nitrotyrosine; alternate. Position 96 is a phosphotyrosine; alternate (Tyr-96). Residues Lys-107 and Lys-122 each carry the N6-acetyllysine; alternate modification. 2 positions are modified to N6-succinyllysine; alternate: Lys-107 and Lys-122. The residue at position 143 (Ser-143) is a Phosphoserine. N6-acetyllysine; alternate is present on Lys-159. Position 159 is an N6-succinyllysine; alternate (Lys-159). Residue Trp-162 coordinates substrate. At Lys-185 the chain carries N6-acetyllysine; alternate. An N6-succinyllysine; alternate modification is found at Lys-185. Residue Asn-215 coordinates substrate. N6-succinyllysine is present on Lys-227. Lys-234 is subject to N6-acetyllysine. An N6-acetyllysine; alternate mark is found at Lys-279 and Lys-296. Lys-279 carries the post-translational modification N6-(pyridoxal phosphate)lysine; alternate. Lys-296 is modified (N6-succinyllysine; alternate). N6-acetyllysine is present on Lys-302. Residue Lys-309 is modified to N6-acetyllysine; alternate. Lys-309 carries the N6-succinyllysine; alternate modification. Asymmetric dimethylarginine is present on Arg-313. Residue Lys-338 is modified to N6-acetyllysine; alternate. Lys-338 carries the post-translational modification N6-succinyllysine; alternate. Lys-345 carries the N6-acetyllysine modification. Lys-363 is subject to N6-acetyllysine; alternate. An N6-succinyllysine; alternate modification is found at Lys-363. N6-acetyllysine is present on residues Lys-364 and Lys-387. N6-acetyllysine; alternate is present on residues Lys-396 and Lys-404. An N6-succinyllysine; alternate mark is found at Lys-396 and Lys-404. Residue Arg-407 coordinates substrate.

This sequence belongs to the class-I pyridoxal-phosphate-dependent aminotransferase family. In terms of assembly, homodimer. Pyridoxal 5'-phosphate serves as cofactor.

It is found in the mitochondrion matrix. The protein resides in the cell membrane. The enzyme catalyses L-aspartate + 2-oxoglutarate = oxaloacetate + L-glutamate. It carries out the reaction L-kynurenine + 2-oxoglutarate = 4-(2-aminophenyl)-2,4-dioxobutanoate + L-glutamate. In terms of biological role, catalyzes the irreversible transamination of the L-tryptophan metabolite L-kynurenine to form kynurenic acid (KA). As a member of the malate-aspartate shuttle, it has a key role in the intracellular NAD(H) redox balance. Is important for metabolite exchange between mitochondria and cytosol, and for amino acid metabolism. Facilitates cellular uptake of long-chain free fatty acids. The sequence is that of Aspartate aminotransferase, mitochondrial (GOT2) from Bos taurus (Bovine).